The following is a 179-amino-acid chain: Large ribosomal subunit protein uL5 (179 aa).

The protein belongs to the universal ribosomal protein uL5 family. As to quaternary structure, part of the 50S ribosomal subunit; part of the 5S rRNA/L5/L18/L25 subcomplex. Contacts the 5S rRNA and the P site tRNA. Forms a bridge to the 30S subunit in the 70S ribosome.

In terms of biological role, this is one of the proteins that bind and probably mediate the attachment of the 5S RNA into the large ribosomal subunit, where it forms part of the central protuberance. In the 70S ribosome it contacts protein S13 of the 30S subunit (bridge B1b), connecting the 2 subunits; this bridge is implicated in subunit movement. Contacts the P site tRNA; the 5S rRNA and some of its associated proteins might help stabilize positioning of ribosome-bound tRNAs. The sequence is that of Large ribosomal subunit protein uL5 from Methylococcus capsulatus (strain ATCC 33009 / NCIMB 11132 / Bath).